We begin with the raw amino-acid sequence, 5202 residues long: Usherin (5202 aa).

An N-terminal signal peptide occupies residues 1–31 (MNCPVLSLGSGFLFQVIEMLIFAYFASISLT). Residues 32–5042 (ESRGLFPRLE…KSTEFYSELW (5011 aa)) are Extracellular-facing. Positions 271-517 (QDFRLYQVAL…AVDEITISGR (247 aa)) constitute a Laminin N-terminal domain. Asn361 and Asn451 each carry an N-linked (GlcNAc...) asparagine glycan. 40 disulfide bridges follow: Cys518–Cys527, Cys520–Cys536, Cys538–Cys549, Cys552–Cys572, Cys575–Cys584, Cys577–Cys605, Cys608–Cys617, Cys620–Cys638, Cys641–Cys655, Cys643–Cys662, Cys664–Cys673, Cys676–Cys691, Cys694–Cys708, Cys696–Cys715, Cys717–Cys726, Cys729–Cys744, Cys747–Cys759, Cys749–Cys766, Cys768–Cys777, Cys780–Cys792, Cys795–Cys808, Cys797–Cys815, Cys817–Cys826, Cys829–Cys844, Cys847–Cys861, Cys849–Cys868, Cys870–Cys879, Cys882–Cys897, Cys900–Cys913, Cys902–Cys920, Cys922–Cys931, Cys934–Cys948, Cys951–Cys963, Cys953–Cys970, Cys972–Cys982, Cys985–Cys999, Cys1002–Cys1014, Cys1004–Cys1021, Cys1023–Cys1032, and Cys1035–Cys1050. 10 Laminin EGF-like domains span residues 518 to 574 (CQCH…NCKP), 575 to 640 (CQCN…VCKP), 641 to 693 (CDCD…GCSP), 694 to 746 (CNCN…GCEP), 747 to 794 (CQCN…NCKA), 795 to 846 (CDCD…LCLP), 847 to 899 (CNCD…HCQM), 900 to 950 (CECD…GCLP), 951 to 1001 (CSCH…RCQP), and 1002 to 1052 (CNCH…GCSK). N-linked (GlcNAc...) asparagine glycosylation is found at Asn587 and Asn611. Asn650 carries an N-linked (GlcNAc...) asparagine glycan. Asn697 carries N-linked (GlcNAc...) asparagine glycosylation. N-linked (GlcNAc...) asparagine glycosylation is found at Asn839, Asn856, and Asn862. N-linked (GlcNAc...) asparagine glycosylation occurs at Asn888. N-linked (GlcNAc...) asparagine glycosylation is present at Asn944. N-linked (GlcNAc...) asparagine glycosylation occurs at Asn1011. Fibronectin type-III domains lie at 1058–1146 (PPPR…TKPG), 1148–1244 (PEGN…APPQ), 1245–1363 (RLSP…SAPV), and 1364–1468 (FMIP…AAPA). Asn1071, Asn1151, and Asn1174 each carry an N-linked (GlcNAc...) asparagine glycan. N-linked (GlcNAc...) asparagine glycans are attached at residues Asn1379, Asn1388, Asn1479, and Asn1635. Laminin G-like domains are found at residues 1517-1709 (MKGI…WEGC) and 1714-1891 (NEGA…LDGC). A disulfide bridge links Cys1672 with Cys1709. The N-linked (GlcNAc...) asparagine glycan is linked to Asn1779. Cys1862 and Cys1891 form a disulfide bridge. Fibronectin type-III domains are found at residues 1869–1955 (TRGA…AAPQ), 1957–2054 (VPTP…TPQE), 2055–2144 (APQE…LPPE), 2145–2239 (HVDS…TDED), 2243–2330 (GVPA…APPE), 2331–2433 (GTVN…MPPG), 2437–2531 (GVLP…TAED), 2535–2622 (PVVP…TLPG), 2624–2722 (PEGI…TRPS), 2726–2819 (GVQP…THPT), 2820–2923 (VPQN…TLAG), 2927–3018 (RGAN…TCDG), 3022–3112 (GMLP…TPSD), and 3113–3209 (IPTP…CCEE). 14 N-linked (GlcNAc...) asparagine glycosylation sites follow: Asn1903, Asn2011, Asn2014, Asn2048, Asn2130, Asn2182, Asn2195, Asn2258, Asn2285, Asn2322, Asn2377, Asn2382, Asn2407, and Asn2413. N-linked (GlcNAc...) asparagine glycosylation is found at Asn2581, Asn2584, Asn2656, Asn2710, Asn2770, and Asn2788. N-linked (GlcNAc...) asparagine glycosylation is found at Asn2930, Asn2937, Asn2970, Asn3032, and Asn3099. 4 N-linked (GlcNAc...) asparagine glycosylation sites follow: Asn3217, Asn3330, Asn3419, and Asn3433. Cystine bridges form between Cys3371-Cys3444 and Cys3399-Cys3425. 16 Fibronectin type-III domains span residues 3403–3497 (CPAS…TKED), 3501–3589 (GVSP…TQGV), 3592–3682 (SILP…AAPE), 3684–3770 (VWVT…TPMS), 3774–3865 (EIYP…TPEA), 3866–3963 (APMD…TLEA), 3964–4067 (PPQD…SSPS), 4068–4153 (GLRN…TDEA), 4157–4261 (SQLA…TLQA), 4262–4357 (PPEG…AAPS), 4358–4445 (EVSP…ALPE), 4446–4530 (NMDS…TSPS), 4534–4630 (GMEP…TPEI), 4636–4733 (PPPH…TGPA), 4734–4827 (PPEG…THPA), and 4828–4927 (PPSG…SFTT). N-linked (GlcNAc...) asparagine glycosylation is found at Asn3653, Asn3694, Asn3733, Asn3780, and Asn3849. A glycan (N-linked (GlcNAc...) asparagine) is linked at Asn3984. Asn4202, Asn4226, Asn4317, and Asn4418 each carry an N-linked (GlcNAc...) asparagine glycan. The tract at residues 4518 to 4541 (ILSPLVKDRTSPSAPSGMEPPKLQ) is disordered. N-linked (GlcNAc...) asparagine glycans are attached at residues Asn4564, Asn4583, Asn4691, Asn4754, and Asn4800. N-linked (GlcNAc...) asparagine glycans are attached at residues Asn4943 and Asn4950. A helical transmembrane segment spans residues 5043-5063 (FIVLMAMLGLILLAIFLSLIL). The Cytoplasmic portion of the chain corresponds to 5064–5202 (QRKIHKEPYI…ERTTFTDTHL (139 aa)). The PDZ-binding motif lies at 5200–5202 (THL).

As to quaternary structure, interacts with collagen IV and fibronectin via its laminin EGF-like domains. Interaction with collagen may be required for stable integration into the basement membrane. Interacts with NINL. Interacts with USH1C. Component of USH2 complex, composed of ADGRV1, PDZD7, USH2A and WHRN. Interacts with ADGRV1/MASS1 (via N-terminal PDZ domain). Interacts (via the cytoplasmic region) with WHRN. Interacts (via the cytoplasmic region) with PDZD7. Interacts (via the cytoplasmic region) with VEZT and MYO7A (via MyTH4-FERM domains); the interaction associates VEZT with the USH2 complex at the stereocilia base. Present in the basement membrane of many, but not all tissues. Expressed in retina, cochlea, small and large intestine, pancreas, bladder, prostate, esophagus, trachea, thymus, salivary glands, placenta, ovary, fallopian tube, uterus and testis. Absent in many other tissues such as heart, lung, liver, kidney and brain. In the retina, it is present in the basement membranes in the Bruch's layer choroid capillary basement membranes, where it localizes just beneath the retinal pigment epithelial cells (at protein level). Weakly expressed. Isoform 2 is expressed in fetal eye, cochlea and heart, and at very low level in brain, CNS, intestine, skeleton, tongue, kidney and lung. Isoform 2 is not expressed in stomach and liver. In adult tissues, isoform 2 is expressed in neural retina and testis, and at low level in brain, heart, kidney and liver. Isoform 1 displays a similar pattern of expression but is expressed at very low level in fetal cochlea.

The protein resides in the cell projection. It is found in the stereocilium membrane. Its subcellular location is the secreted. Its function is as follows. Involved in hearing and vision as member of the USH2 complex. In the inner ear, required for the maintenance of the hair bundle ankle formation, which connects growing stereocilia in developing cochlear hair cells. In retina photoreceptors, the USH2 complex is required for the maintenance of periciliary membrane complex that seems to play a role in regulating intracellular protein transport. In Homo sapiens (Human), this protein is Usherin (USH2A).